We begin with the raw amino-acid sequence, 758 residues long: 5-methyltetrahydropteroyltriglutamate--homocysteine methyltransferase (758 aa).

Residues 16–19 (RELK) and lysine 112 contribute to the 5-methyltetrahydropteroyltri-L-glutamate site. Residues 433-435 (IGS) and glutamate 486 each bind L-homocysteine. L-methionine-binding positions include 433-435 (IGS) and glutamate 486. 5-methyltetrahydropteroyltri-L-glutamate-binding positions include 517-518 (RC) and tryptophan 563. Aspartate 601 provides a ligand contact to L-homocysteine. Residue aspartate 601 coordinates L-methionine. 5-methyltetrahydropteroyltri-L-glutamate is bound at residue glutamate 607. Zn(2+) is bound by residues histidine 643, cysteine 645, and glutamate 667. The active-site Proton donor is the histidine 696. Cysteine 728 serves as a coordination point for Zn(2+).

The protein belongs to the vitamin-B12 independent methionine synthase family. Requires Zn(2+) as cofactor.

It carries out the reaction 5-methyltetrahydropteroyltri-L-glutamate + L-homocysteine = tetrahydropteroyltri-L-glutamate + L-methionine. It functions in the pathway amino-acid biosynthesis; L-methionine biosynthesis via de novo pathway; L-methionine from L-homocysteine (MetE route): step 1/1. Functionally, catalyzes the transfer of a methyl group from 5-methyltetrahydrofolate to homocysteine resulting in methionine formation. The protein is 5-methyltetrahydropteroyltriglutamate--homocysteine methyltransferase of Neisseria gonorrhoeae (strain ATCC 700825 / FA 1090).